Reading from the N-terminus, the 108-residue chain is Phosphoribosyl-AMP cyclohydrolase (108 aa).

D73 provides a ligand contact to Mg(2+). C74 contacts Zn(2+). 2 residues coordinate Mg(2+): D75 and D77. Residues C90 and C97 each coordinate Zn(2+).

The protein belongs to the PRA-CH family. Homodimer. Mg(2+) serves as cofactor. It depends on Zn(2+) as a cofactor.

It localises to the cytoplasm. The catalysed reaction is 1-(5-phospho-beta-D-ribosyl)-5'-AMP + H2O = 1-(5-phospho-beta-D-ribosyl)-5-[(5-phospho-beta-D-ribosylamino)methylideneamino]imidazole-4-carboxamide. The protein operates within amino-acid biosynthesis; L-histidine biosynthesis; L-histidine from 5-phospho-alpha-D-ribose 1-diphosphate: step 3/9. Catalyzes the hydrolysis of the adenine ring of phosphoribosyl-AMP. The protein is Phosphoribosyl-AMP cyclohydrolase of Lactiplantibacillus plantarum (strain ATCC BAA-793 / NCIMB 8826 / WCFS1) (Lactobacillus plantarum).